A 180-amino-acid chain; its full sequence is Nascent polypeptide-associated complex subunit alpha (180 aa).

Positions 16–80 (SKNEKKAREL…AKVDDMNKRI (65 aa)) constitute an NAC-A/B domain. Residues 81 to 113 (AEAQQQQAQQDALSKAAGETGEAGEEDKSQDAI) form a disordered region. A compositionally biased stretch (low complexity) spans 82-100 (EAQQQQAQQDALSKAAGET). Positions 142 to 179 (LDAKDIDIIVEQTQVSRAKAVKALRVHDGDMVNAIMEL) constitute a UBA domain.

It belongs to the NAC-alpha family. In terms of assembly, part of the nascent polypeptide-associated complex (NAC), consisting of EGD2 and EGD1. NAC associates with ribosomes via EGD1.

The protein resides in the cytoplasm. It localises to the nucleus. Its function is as follows. Component of the nascent polypeptide-associated complex (NAC), a dynamic component of the ribosomal exit tunnel, protecting the emerging polypeptides from interaction with other cytoplasmic proteins to ensure appropriate nascent protein targeting. The NAC complex also promotes mitochondrial protein import by enhancing productive ribosome interactions with the outer mitochondrial membrane and blocks the inappropriate interaction of ribosomes translating non-secretory nascent polypeptides with translocation sites in the membrane of the endoplasmic reticulum. EGD2 may also be involved in transcription regulation. The sequence is that of Nascent polypeptide-associated complex subunit alpha (EGD2) from Debaryomyces hansenii (strain ATCC 36239 / CBS 767 / BCRC 21394 / JCM 1990 / NBRC 0083 / IGC 2968) (Yeast).